Reading from the N-terminus, the 333-residue chain is Holliday junction branch migration complex subunit RuvB (333 aa).

Positions 1–182 (MDERLLSGES…FGVLSRLEYY (182 aa)) are large ATPase domain (RuvB-L). Residues Leu-21, Arg-22, Gly-63, Lys-66, Thr-67, Thr-68, 129-131 (EDF), Arg-172, Tyr-182, and Arg-219 each bind ATP. Thr-67 is a binding site for Mg(2+). The segment at 183–253 (TVDQLSAIVE…ITQMALELLQ (71 aa)) is small ATPAse domain (RuvB-S). The segment at 256–333 (KLGLDHIDHK…EHFGMEMPKV (78 aa)) is head domain (RuvB-H). DNA contacts are provided by Arg-311 and Arg-316.

Belongs to the RuvB family. In terms of assembly, homohexamer. Forms an RuvA(8)-RuvB(12)-Holliday junction (HJ) complex. HJ DNA is sandwiched between 2 RuvA tetramers; dsDNA enters through RuvA and exits via RuvB. An RuvB hexamer assembles on each DNA strand where it exits the tetramer. Each RuvB hexamer is contacted by two RuvA subunits (via domain III) on 2 adjacent RuvB subunits; this complex drives branch migration. In the full resolvosome a probable DNA-RuvA(4)-RuvB(12)-RuvC(2) complex forms which resolves the HJ.

It is found in the cytoplasm. The enzyme catalyses ATP + H2O = ADP + phosphate + H(+). In terms of biological role, the RuvA-RuvB-RuvC complex processes Holliday junction (HJ) DNA during genetic recombination and DNA repair, while the RuvA-RuvB complex plays an important role in the rescue of blocked DNA replication forks via replication fork reversal (RFR). RuvA specifically binds to HJ cruciform DNA, conferring on it an open structure. The RuvB hexamer acts as an ATP-dependent pump, pulling dsDNA into and through the RuvAB complex. RuvB forms 2 homohexamers on either side of HJ DNA bound by 1 or 2 RuvA tetramers; 4 subunits per hexamer contact DNA at a time. Coordinated motions by a converter formed by DNA-disengaged RuvB subunits stimulates ATP hydrolysis and nucleotide exchange. Immobilization of the converter enables RuvB to convert the ATP-contained energy into a lever motion, pulling 2 nucleotides of DNA out of the RuvA tetramer per ATP hydrolyzed, thus driving DNA branch migration. The RuvB motors rotate together with the DNA substrate, which together with the progressing nucleotide cycle form the mechanistic basis for DNA recombination by continuous HJ branch migration. Branch migration allows RuvC to scan DNA until it finds its consensus sequence, where it cleaves and resolves cruciform DNA. This is Holliday junction branch migration complex subunit RuvB from Bacillus anthracis (strain A0248).